The primary structure comprises 344 residues: Ribosomal RNA large subunit methyltransferase Cfr (344 aa).

The active-site Proton acceptor is the Glu-90. Positions 97 to 330 (KQGWESFCIS…ATVRTQFGSE (234 aa)) constitute a Radical SAM core domain. An intrachain disulfide couples Cys-104 to Cys-335. Cys-111, Cys-115, and Cys-118 together coordinate [4Fe-4S] cluster. S-adenosyl-L-methionine is bound by residues 157-158 (GE), Ser-188, 211-213 (SLH), and Asn-292. Catalysis depends on Cys-335, which acts as the S-methylcysteine intermediate.

The protein belongs to the radical SAM superfamily. RlmN family. Cfr subfamily. It depends on [4Fe-4S] cluster as a cofactor.

Its subcellular location is the cytoplasm. It carries out the reaction adenosine(2503) in 23S rRNA + 2 reduced [2Fe-2S]-[ferredoxin] + 2 S-adenosyl-L-methionine = 8-methyladenosine(2503) in 23S rRNA + 5'-deoxyadenosine + L-methionine + 2 oxidized [2Fe-2S]-[ferredoxin] + S-adenosyl-L-homocysteine. Functionally, specifically methylates position 8 of adenine 2503 in 23S rRNA. Confers resistance to some classes of antibiotics. This Clostridium botulinum (strain Okra / Type B1) protein is Ribosomal RNA large subunit methyltransferase Cfr.